The chain runs to 61 residues: Small ribosomal subunit protein uS14 (61 aa).

Residues cysteine 24, cysteine 27, cysteine 40, and cysteine 43 each contribute to the Zn(2+) site.

It belongs to the universal ribosomal protein uS14 family. Zinc-binding uS14 subfamily. Part of the 30S ribosomal subunit. Contacts proteins S3 and S10. The cofactor is Zn(2+).

In terms of biological role, binds 16S rRNA, required for the assembly of 30S particles and may also be responsible for determining the conformation of the 16S rRNA at the A site. In Caldanaerobacter subterraneus subsp. tengcongensis (strain DSM 15242 / JCM 11007 / NBRC 100824 / MB4) (Thermoanaerobacter tengcongensis), this protein is Small ribosomal subunit protein uS14.